The sequence spans 211 residues: Cytochrome c biogenesis ATP-binding export protein CcmA (211 aa).

An ABC transporter domain is found at 17–209 (LDVEDVTVFR…PSLAHVESFW (193 aa)). 49–56 (GPNGAGKS) contributes to the ATP binding site.

This sequence belongs to the ABC transporter superfamily. CcmA exporter (TC 3.A.1.107) family. In terms of assembly, the complex is composed of two ATP-binding proteins (CcmA) and two transmembrane proteins (CcmB).

Its subcellular location is the cell inner membrane. It carries out the reaction heme b(in) + ATP + H2O = heme b(out) + ADP + phosphate + H(+). Functionally, part of the ABC transporter complex CcmAB involved in the biogenesis of c-type cytochromes; once thought to export heme, this seems not to be the case, but its exact role is uncertain. Responsible for energy coupling to the transport system. The chain is Cytochrome c biogenesis ATP-binding export protein CcmA from Gluconobacter oxydans (strain 621H) (Gluconobacter suboxydans).